The sequence spans 435 residues: MAAKGAKETLVNKLGFKSSSSSSKSAELEVEKLKRENQQMKKSLEDMKRAGRHQHTHPDTDKARLLERILALETLREKNNQQLLGREQEITTLRQQLRSAHGEVVSSLQSQLENKQHEAEQRERQYQALVKETEDLKNKYCAVSERCDTLEKQKGSSGELAVVQEQLRDALEKNQHWLVYDQQREAYVQGVLARIKDLEAQLNEANQALQQQHKEAKSDDQSAQKVQQELEAERNKVSRMQMEVEDLQVRYEEKSREAAQAREQLLEERRREREDRKSSVERDALLQDQHRKREAELIMQVNLLQKSLMNQKEEQKRMAILEQQIQLSAKESENEKLDRQTLQHQLHKVLKELRKARDQITRLESSKQQRESRFSEPSSYNRMDLERLTIQDHMTSPSKVHNILDESVLECPNCGASYPTSQHRELLAHLDYCFT.

Disordered regions lie at residues M1–A63, H213–R239, and E268–Q287. Coiled coils occupy residues S18 to Y140 and E185 to R373. Basic and acidic residues-rich tracts occupy residues A26–R49 and H213–S222.

The protein localises to the cytoplasm. The protein resides in the cytoskeleton. It localises to the microtubule organizing center. It is found in the centrosome. Its subcellular location is the centriole. The protein localises to the cleavage furrow. The protein resides in the midbody. It localises to the midbody ring. Functionally, plays a role in mitotic exit and cytokinesis. Recruits PDCD6IP and TSG101 to midbody during cytokinesis. Required for successful completion of cytokinesis. Not required for microtubule nucleation. Plays a role in the development of the brain and kidney. The protein is Centrosomal protein of 55 kDa of Danio rerio (Zebrafish).